Reading from the N-terminus, the 310-residue chain is Membrane protein insertase YidC 2 (310 aa).

The N-terminal stretch at 1–23 (MKKTLKRILFSSLSLSILLLLTG) is a signal peptide. Cys-24 carries N-palmitoyl cysteine lipidation. The S-diacylglycerol cysteine moiety is linked to residue Cys-24. The next 5 helical transmembrane spans lie at 33-53 (PYGV…TYFA), 58-78 (LGFG…ILPL), 135-155 (FGGI…AIFF), 180-200 (LTVI…QGVP), and 219-239 (VFMS…GGIF). The interval 262–310 (EYTKNPPKAYKSNNARKDVTSSTKTTESNQAIITSKKTNRNAGKQKRRG) is disordered. Positions 281–297 (TSSTKTTESNQAIITSK) are enriched in polar residues. Positions 298-310 (KTNRNAGKQKRRG) are enriched in basic residues.

It belongs to the OXA1/ALB3/YidC family. Type 2 subfamily.

It localises to the cell membrane. In terms of biological role, required for the insertion and/or proper folding and/or complex formation of integral membrane proteins into the membrane. Involved in integration of membrane proteins that insert both dependently and independently of the Sec translocase complex, as well as at least some lipoproteins. This chain is Membrane protein insertase YidC 2, found in Streptococcus agalactiae serotype III (strain NEM316).